A 130-amino-acid polypeptide reads, in one-letter code: UPF0146 protein AF_0739.1 (130 aa).

Belongs to the UPF0146 family.

This Archaeoglobus fulgidus (strain ATCC 49558 / DSM 4304 / JCM 9628 / NBRC 100126 / VC-16) protein is UPF0146 protein AF_0739.1.